The chain runs to 561 residues: Putative transport protein YbjL (561 aa).

Helical transmembrane passes span leucine 8–glycine 28, leucine 32–glutamine 52, phenylalanine 66–phenylalanine 86, methionine 94–phenylalanine 114, and asparagine 158–alanine 178. RCK C-terminal domains are found at residues arginine 200–asparagine 288 and valine 292–phenylalanine 373. The next 5 helical transmembrane spans lie at leucine 383–phenylalanine 403, phenylalanine 406–leucine 426, phenylalanine 447–glycine 467, methionine 475–alanine 495, and alanine 540–leucine 560.

It belongs to the AAE transporter (TC 2.A.81) family. YbjL subfamily.

Its subcellular location is the cell membrane. The polypeptide is Putative transport protein YbjL (Salmonella arizonae (strain ATCC BAA-731 / CDC346-86 / RSK2980)).